The following is a 484-amino-acid chain: Bifunctional protein GlmU (484 aa).

The segment at 1-240 (MSASRPAAVM…RTEVEGVNDR (240 aa)) is pyrophosphorylase. UDP-N-acetyl-alpha-D-glucosamine contacts are provided by residues 12–15 (LAAG), Lys26, Gln79, and 84–85 (GT). Residue Asp113 participates in Mg(2+) binding. Positions 150, 165, 180, and 238 each coordinate UDP-N-acetyl-alpha-D-glucosamine. Mg(2+) is bound at residue Asn238. The interval 241 to 261 (VQLAEARRLLNARLLEQLMRD) is linker. An N-acetyltransferase region spans residues 262–484 (GVTVVDPAST…RARARSEEDR (223 aa)). Residues Arg343 and Lys361 each contribute to the UDP-N-acetyl-alpha-D-glucosamine site. Residue His373 is the Proton acceptor of the active site. 2 residues coordinate UDP-N-acetyl-alpha-D-glucosamine: Tyr376 and Asn387. Acetyl-CoA contacts are provided by residues Ala390, 396–397 (NY), Ser415, and Ala433. The disordered stretch occupies residues 457 to 484 (EGWVERKRPGTPAAQAAERARARSEEDR). Over residues 474 to 484 (ERARARSEEDR) the composition is skewed to basic and acidic residues.

This sequence in the N-terminal section; belongs to the N-acetylglucosamine-1-phosphate uridyltransferase family. The protein in the C-terminal section; belongs to the transferase hexapeptide repeat family. In terms of assembly, homotrimer. Requires Mg(2+) as cofactor.

The protein localises to the cytoplasm. The catalysed reaction is alpha-D-glucosamine 1-phosphate + acetyl-CoA = N-acetyl-alpha-D-glucosamine 1-phosphate + CoA + H(+). The enzyme catalyses N-acetyl-alpha-D-glucosamine 1-phosphate + UTP + H(+) = UDP-N-acetyl-alpha-D-glucosamine + diphosphate. The protein operates within nucleotide-sugar biosynthesis; UDP-N-acetyl-alpha-D-glucosamine biosynthesis; N-acetyl-alpha-D-glucosamine 1-phosphate from alpha-D-glucosamine 6-phosphate (route II): step 2/2. It participates in nucleotide-sugar biosynthesis; UDP-N-acetyl-alpha-D-glucosamine biosynthesis; UDP-N-acetyl-alpha-D-glucosamine from N-acetyl-alpha-D-glucosamine 1-phosphate: step 1/1. Its pathway is bacterial outer membrane biogenesis; LPS lipid A biosynthesis. In terms of biological role, catalyzes the last two sequential reactions in the de novo biosynthetic pathway for UDP-N-acetylglucosamine (UDP-GlcNAc). The C-terminal domain catalyzes the transfer of acetyl group from acetyl coenzyme A to glucosamine-1-phosphate (GlcN-1-P) to produce N-acetylglucosamine-1-phosphate (GlcNAc-1-P), which is converted into UDP-GlcNAc by the transfer of uridine 5-monophosphate (from uridine 5-triphosphate), a reaction catalyzed by the N-terminal domain. The chain is Bifunctional protein GlmU from Thermobifida fusca (strain YX).